Consider the following 145-residue polypeptide: MRVVIQRVNHAQVNINGKTVGKIGKGVMLLVGIKNGDELPVVKKAADKIAKMRIFEDEEGKTNLSLKDVGGEILSVSQFTLMANTKKGNRPSFVDAMRPPKSKELWEDFNKELEADSFHVETGEFGADMQVELENDGPFTIVLDL.

The Gly-cisPro motif, important for rejection of L-amino acids signature appears at 137–138; it reads GP.

Belongs to the DTD family. As to quaternary structure, homodimer.

The protein resides in the cytoplasm. The catalysed reaction is glycyl-tRNA(Ala) + H2O = tRNA(Ala) + glycine + H(+). It carries out the reaction a D-aminoacyl-tRNA + H2O = a tRNA + a D-alpha-amino acid + H(+). Its function is as follows. An aminoacyl-tRNA editing enzyme that deacylates mischarged D-aminoacyl-tRNAs. Also deacylates mischarged glycyl-tRNA(Ala), protecting cells against glycine mischarging by AlaRS. Acts via tRNA-based rather than protein-based catalysis; rejects L-amino acids rather than detecting D-amino acids in the active site. By recycling D-aminoacyl-tRNA to D-amino acids and free tRNA molecules, this enzyme counteracts the toxicity associated with the formation of D-aminoacyl-tRNA entities in vivo and helps enforce protein L-homochirality. This is D-aminoacyl-tRNA deacylase from Lactobacillus helveticus (strain DPC 4571).